We begin with the raw amino-acid sequence, 339 residues long: NADH-quinone oxidoreductase subunit H (339 aa).

The next 9 membrane-spanning stretches (helical) occupy residues 9–29 (IFPL…LILC), 50–70 (PNVV…KLLF), 82–102 (ILFI…WAVI), 115–135 (VGVL…IIAG), 161–181 (MGLV…SGII), 187–207 (MPWW…ISVL), 235–255 (MGFA…SAMT), 275–295 (IPGF…FLWI), and 311–331 (GWKV…SVLV).

The protein belongs to the complex I subunit 1 family. In terms of assembly, NDH-1 is composed of 14 different subunits. Subunits NuoA, H, J, K, L, M, N constitute the membrane sector of the complex.

Its subcellular location is the cell inner membrane. The catalysed reaction is a quinone + NADH + 5 H(+)(in) = a quinol + NAD(+) + 4 H(+)(out). Its function is as follows. NDH-1 shuttles electrons from NADH, via FMN and iron-sulfur (Fe-S) centers, to quinones in the respiratory chain. The immediate electron acceptor for the enzyme in this species is believed to be ubiquinone. Couples the redox reaction to proton translocation (for every two electrons transferred, four hydrogen ions are translocated across the cytoplasmic membrane), and thus conserves the redox energy in a proton gradient. This subunit may bind ubiquinone. This Rickettsia felis (strain ATCC VR-1525 / URRWXCal2) (Rickettsia azadi) protein is NADH-quinone oxidoreductase subunit H.